A 28-amino-acid chain; its full sequence is Turritoxin F21-2 (28 aa).

Expressed by the venom duct.

The protein resides in the secreted. Potent inhibitor of human alpha-3-beta-2 nAChRs (IC(50)=566.2 nM). Irreversibly inhibits the acetylcholine-induced response on human alpha-7/CHRNA7 (55% inhibition at 5.6 uM) and alpha-3-beta-2/CHRNA3-CHRNB2 (91% inhibition) nAChRs. In Polystira nobilis (Sea snail), this protein is Turritoxin F21-2.